Here is a 491-residue protein sequence, read N- to C-terminus: Glycogen synthase 2 (491 aa).

Lys16 serves as a coordination point for ADP-alpha-D-glucose.

The protein belongs to the glycosyltransferase 1 family. Bacterial/plant glycogen synthase subfamily.

It carries out the reaction [(1-&gt;4)-alpha-D-glucosyl](n) + ADP-alpha-D-glucose = [(1-&gt;4)-alpha-D-glucosyl](n+1) + ADP + H(+). The protein operates within glycan biosynthesis; glycogen biosynthesis. Functionally, synthesizes alpha-1,4-glucan chains using ADP-glucose. This Nitrosococcus oceani (strain ATCC 19707 / BCRC 17464 / JCM 30415 / NCIMB 11848 / C-107) protein is Glycogen synthase 2.